The chain runs to 256 residues: MDKSTQIPPDSFAARLKQAMAMRNLKQETLAEAAGVSQNTIHKLTSGKAQSTRKLIEIAAALGVSPVWLQTGEGAPAARSAVSVADGSPLVLEPLHPWDSDTPLDEDEVELPLYKEVEMSAGAGRTAVREIEGRKLRFSYATLRASGVDPSAAICAQLTGNSMEPLIMDGSTIGVDTATTHITDGEIYALEHDGMLRVKFVYRLPGGGIRLRSFNREEYPDEEYSPEDMRSRQISMIGWVFWWSTVRHRRGPSLVR.

One can recognise an HTH cro/C1-type domain in the interval Leu16–Leu69. The H-T-H motif DNA-binding region spans Gln27–Ser46.

Represses the promoter activity of the prtN gene. In Pseudomonas aeruginosa (strain ATCC 15692 / DSM 22644 / CIP 104116 / JCM 14847 / LMG 12228 / 1C / PRS 101 / PAO1), this protein is HTH-type transcriptional regulator PrtR (prtR).